Consider the following 291-residue polypeptide: Nucleotide-binding protein lin2617 (291 aa).

13 to 20 (GMSGAGKT) is an ATP binding site. 63 to 66 (DLRG) is a binding site for GTP.

This sequence belongs to the RapZ-like family.

Displays ATPase and GTPase activities. The protein is Nucleotide-binding protein lin2617 of Listeria innocua serovar 6a (strain ATCC BAA-680 / CLIP 11262).